Reading from the N-terminus, the 191-residue chain is uncharacterized protein (191 aa).

6 consecutive transmembrane segments (helical) span residues Ile4–Phe24, Lys26–Cys46, Gly68–Ile88, Ala90–Ile110, Leu135–Ile155, and Leu168–Met188.

It is found in the cell membrane. This is an uncharacterized protein from Methanocaldococcus jannaschii (strain ATCC 43067 / DSM 2661 / JAL-1 / JCM 10045 / NBRC 100440) (Methanococcus jannaschii).